A 353-amino-acid polypeptide reads, in one-letter code: 2-oxoglutarate-dependent dioxygenase phqC (353 aa).

Residues 199 to 315 (CASELRLNNY…RRSCAFFLKA (117 aa)) enclose the Fe2OG dioxygenase domain. Fe cation contacts are provided by His227, Asp229, and His287. Arg302 serves as a coordination point for 2-oxoglutarate.

The protein belongs to the iron/ascorbate-dependent oxidoreductase family. The cofactor is Fe(2+).

The protein operates within alkaloid biosynthesis. In terms of biological role, 2-oxoglutarate-dependent dioxygenase; part of the gene cluster that mediates the biosynthesis of paraherquamide, a fungal indole alkaloid that belongs to a family of natural products containing a characteristic bicyclo[2.2.2]diazaoctane core. The first steps in the biosynthesis of paraherquamide is the production of the beta-methyl-proline precursor from L-isoleucine. They require oxidation of a terminally hydroxylated L-isoleucine to the corresponding aldehyde by enzymes which have still to be identified. Spontaneous cyclization and dehydration would yield the 4-methyl pyrolline-5-carboxylic acid, which is then reduced by the pyrroline-5-carboxylate reductase phqD leading to the beta-methyl-proline precursor. The next step of paraherquamide biosynthesis involves coupling of beta-methyl-proline and L-tryptophan by the bimodular NRPS phqB, to produce a monooxopiperazine intermediate. The reductase (R) domain of phqB utilizes NADPH for hydride transfer to reduce the thioester bond of the T domain-tethered linear dipeptide to a hemithioaminal intermediate, which spontaneously cleaves the C-S bond to release the aldehyde product. This compound undergoes spontaneous cyclization and dehydration to give a dienamine which is reverse prenylated at C-2 by the reverse prenyltransferase phqJ. The other prenyltransferase present in the cluster, phqI may be a redundant gene in the pathway. During biosynthetic assembly, the key step to produce the polycyclic core is catalyzed by the bifunctional reductase and intramolecular [4+2] Diels-Alderase, phqE, resulting in formation of the [2.2.2] diazaoctane intermediate preparaherquamide. Following formation of preparaherquamide, an indole 2,3-epoxidation-initiated pinacol-like rearrangement is catalyzed by the phqK FAD-dependent monooxygenase. The prenyltransferase phqA, the cytochrome P450 monooxygenase phqL, and the FAD-linked oxidoreductase phqH (or the cytochrome P450 monooxygenase phqM), are proposed to be involved in the formation of the pyran ring. The FAD-dependent monooxygenase phqK is likely responsible for generation of the spiro-oxindole, and the N-methylation is likely mediated by the phqN methyltransferase leading to the isolable natural product paraherquamide F. However, the order of these biosynthetic steps has still to be determined. In late-stage paraherquamide biosynthesis, the third P450 monooxygenase, phqO, is probably responsible for the C-14 hydroxylation, transforming paraherquamide F to paraherquamide G, and paraherquamide E to the final product paraherquamide A. The expansion from the 6-membered ring pyran (in paraherquamides F and G) to the 7-membered dioxepin ring (in paraherquamides A and E) represents a poorly understood but intriguing process that probably involves the 2-oxoglutarate-dependent dioxygenase phqC. Finally, the remaining members of the paraherquamide cluster, including phqI as well as phqM (or phqH), do not have a clearly prescribed role and appear to be redundant. The polypeptide is 2-oxoglutarate-dependent dioxygenase phqC (Penicillium fellutanum).